The following is a 299-amino-acid chain: tRNA(Met) cytidine acetate ligase (299 aa).

ATP contacts are provided by residues 6 to 19, Gly-100, Asn-157, and Arg-182; that span reads IAEY…HIYM.

This sequence belongs to the TmcAL family.

It is found in the cytoplasm. It catalyses the reaction cytidine(34) in elongator tRNA(Met) + acetate + ATP = N(4)-acetylcytidine(34) in elongator tRNA(Met) + AMP + diphosphate. Functionally, catalyzes the formation of N(4)-acetylcytidine (ac(4)C) at the wobble position of elongator tRNA(Met), using acetate and ATP as substrates. First activates an acetate ion to form acetyladenylate (Ac-AMP) and then transfers the acetyl group to tRNA to form ac(4)C34. This chain is tRNA(Met) cytidine acetate ligase, found in Mycoplasma mobile (strain ATCC 43663 / 163K / NCTC 11711) (Mesomycoplasma mobile).